An 89-amino-acid chain; its full sequence is Small ribosomal subunit protein uS15 (89 aa).

It belongs to the universal ribosomal protein uS15 family. As to quaternary structure, part of the 30S ribosomal subunit. Forms a bridge to the 50S subunit in the 70S ribosome, contacting the 23S rRNA.

In terms of biological role, one of the primary rRNA binding proteins, it binds directly to 16S rRNA where it helps nucleate assembly of the platform of the 30S subunit by binding and bridging several RNA helices of the 16S rRNA. Its function is as follows. Forms an intersubunit bridge (bridge B4) with the 23S rRNA of the 50S subunit in the ribosome. The chain is Small ribosomal subunit protein uS15 from Gluconacetobacter diazotrophicus (strain ATCC 49037 / DSM 5601 / CCUG 37298 / CIP 103539 / LMG 7603 / PAl5).